Reading from the N-terminus, the 230-residue chain is MKADVFDPRALREAFGAFPTAVTVITASDPAGRPVGFTANSFTSVSLDPPLLLVCVAKTARDYSTMTAAEHFAINILSEAQKDVSIKFARPLEDRFAAVDWARAPNGCPIFAQVAAWFECSMHDVIEAGDHVMMVGRVTAFKSSGLNGLGYARGGYFAPSVAAKANSSAAGGEIGAVAVLERHAALFPLGDQNLSLPRYSAAGGDPAKTLASQLERSGLSVHDWLSLLDL.

It belongs to the non-flavoprotein flavin reductase family. As to quaternary structure, the system is probably composed of an oxygenase subunit (Stc2) and two reductase subunits (Stc3 and Stc4).

In terms of biological role, reductase involved in the catabolism of stachydrine (L-proline betaine), a source of carbon and nitrogen. Part of a Rieske-type oxygenase system that catalyzes the demethylation of stachydrine to produce N-methyl-L-proline (monomethylproline). This subunit is probably involved in the transfer of electrons from NAD(P)H to the catalytic subunit Stc2. The sequence is that of Stachydrine N-demethylase reductase subunit Stc3 from Rhizobium meliloti (strain 1021) (Ensifer meliloti).